The chain runs to 256 residues: N-acetylglucosaminyldiphosphoundecaprenol N-acetyl-beta-D-mannosaminyltransferase (256 aa).

It belongs to the glycosyltransferase 26 family. TagA/TarA subfamily.

The catalysed reaction is UDP-N-acetyl-alpha-D-mannosamine + N-acetyl-alpha-D-glucosaminyl-di-trans,octa-cis-undecaprenyl diphosphate = N-acetyl-beta-D-mannosaminyl-(1-&gt;4)-N-acetyl-alpha-D-glucosaminyl di-trans,octa-cis-undecaprenyl diphosphate + UDP + H(+). It functions in the pathway cell wall biogenesis; poly(glycerol phosphate) teichoic acid biosynthesis. Catalyzes the conversion of GlcNAc-PP-undecaprenol into ManNAc-GlcNAc-PP-undecaprenol, the first committed lipid intermediate in the de novo synthesis of teichoic acid. This is N-acetylglucosaminyldiphosphoundecaprenol N-acetyl-beta-D-mannosaminyltransferase from Bacillus subtilis (strain 168).